Here is a 743-residue protein sequence, read N- to C-terminus: Putative pentatricopeptide repeat-containing protein At1g68930 (743 aa).

15 PPR repeats span residues 40–70 (ETFL…IPQP), 71–101 (NLFS…LPDR), 102–132 (DGVT…MMRD), 138–172 (TRVT…GFES), 173–203 (YLLV…LDDR), 204–233 (NTVM…GMEK), 234–268 (DSVS…GLKM), 269–303 (DQYP…NFQD), 304–334 (HIYV…MKQK), 335–369 (NVVS…GIDP), 370–404 (DHYT…GLIH), 405–435 (YVTV…MNVR), 436–470 (DAVS…GLKP), 471–506 (DGVT…GIVP), and 507–537 (SIGH…MPFP). Positions 542–617 (GWTTLLSACR…EPGQSWIKWK (76 aa)) are type E motif. The type E(+) motif stretch occupies residues 618–648 (GKLHSFSADDESSPYLDQIYAKLEELNNKII). Residues 649–743 (DNGYKPDTSF…DGTCSCGDFW (95 aa)) are type DYW motif.

It belongs to the PPR family. PCMP-H subfamily.

The polypeptide is Putative pentatricopeptide repeat-containing protein At1g68930 (PCMP-H22) (Arabidopsis thaliana (Mouse-ear cress)).